Consider the following 313-residue polypeptide: UPF0761 membrane protein VV1_0885 (313 aa).

The next 6 helical transmembrane spans lie at 41–61, 104–124, 139–159, 185–205, 215–235, and 249–269; these read YLAY…LSIL, MTAV…SNID, AVFS…LVGA, LLRW…YLLV, AVVG…GFAA, and ALAA…IVLI. The segment at 294–313 is disordered; that stretch reads PNNDTELEKDTQRDRFDSES. The span at 299–313 shows a compositional bias: basic and acidic residues; it reads ELEKDTQRDRFDSES.

It belongs to the UPF0761 family.

Its subcellular location is the cell inner membrane. The sequence is that of UPF0761 membrane protein VV1_0885 from Vibrio vulnificus (strain CMCP6).